We begin with the raw amino-acid sequence, 740 residues long: Ribulose bisphosphate carboxylase, chloroplastic (740 aa).

A chloroplast-targeting transit peptide spans 1–55 (MPSSSFTTGLALGAGALVGANAFVAPTAKTTNLRAPTQEASLQVAASQQTEQPAP). A helical transmembrane segment spans residues 56 to 76 (STSALPWAFGAGACLALAAGG). Position 213 (Asn-213) interacts with substrate. Lys-268 acts as the Proton acceptor in catalysis. A substrate-binding site is contributed by Lys-270. Residues Lys-293, Asp-295, and Glu-296 each coordinate Mg(2+). At Lys-293 the chain carries N6-carboxylysine. The active-site Proton acceptor is His-389. Arg-390, His-423, and Ser-470 together coordinate substrate.

This sequence belongs to the RuBisCO large chain family. Type II subfamily. In terms of assembly, homodimer. Mg(2+) is required as a cofactor.

It is found in the plastid. Its subcellular location is the chloroplast membrane. It carries out the reaction 2 (2R)-3-phosphoglycerate + 2 H(+) = D-ribulose 1,5-bisphosphate + CO2 + H2O. The catalysed reaction is D-ribulose 1,5-bisphosphate + O2 = 2-phosphoglycolate + (2R)-3-phosphoglycerate + 2 H(+). RuBisCO catalyzes two reactions: the carboxylation of D-ribulose 1,5-bisphosphate, the primary event in carbon dioxide fixation, as well as the oxidative fragmentation of the pentose substrate. Both reactions occur simultaneously and in competition at the same active site. The polypeptide is Ribulose bisphosphate carboxylase, chloroplastic (rbcL) (Heterocapsa triquetra (Dinoflagellate)).